Consider the following 284-residue polypeptide: Tropomyosin-1 (284 aa).

The stretch at 1 to 284 forms a coiled coil; it reads MDGIKKKMIA…DQTFAELTGY (284 aa). Positions 111 to 131 are disordered; sequence TKLEEASKTAEESERGRKDLE.

The protein belongs to the tropomyosin family. In terms of assembly, homodimer.

In terms of biological role, tropomyosin, in association with the troponin complex, plays a central role in the calcium dependent regulation of muscle contraction. This chain is Tropomyosin-1, found in Schistosoma mansoni (Blood fluke).